The following is a 436-amino-acid chain: Chaperone SurA (436 aa).

The first 30 residues, 1-30 (MKFFQRPERRLKQWGLALLLAASALLPARA), serve as a signal peptide directing secretion. 2 PpiC domains span residues 180–281 (ETEY…KLVD) and 291–389 (VTQT…QVLE).

It localises to the periplasm. It catalyses the reaction [protein]-peptidylproline (omega=180) = [protein]-peptidylproline (omega=0). Functionally, chaperone involved in the correct folding and assembly of outer membrane proteins. Recognizes specific patterns of aromatic residues and the orientation of their side chains, which are found more frequently in integral outer membrane proteins. May act in both early periplasmic and late outer membrane-associated steps of protein maturation. In Thiobacillus denitrificans (strain ATCC 25259 / T1), this protein is Chaperone SurA.